A 218-amino-acid chain; its full sequence is ATP-dependent dethiobiotin synthetase BioD (218 aa).

An ATP-binding site is contributed by 10–15; the sequence is NAGKTT. T14 contributes to the Mg(2+) binding site. The active site involves K35. T39 provides a ligand contact to substrate. 2 residues coordinate Mg(2+): H52 and E116. Residues 116 to 119 and 176 to 177 contribute to the ATP site; these read EGAG and LR.

The protein belongs to the dethiobiotin synthetase family. As to quaternary structure, homodimer. Requires Mg(2+) as cofactor.

It is found in the cytoplasm. It carries out the reaction (7R,8S)-7,8-diammoniononanoate + CO2 + ATP = (4R,5S)-dethiobiotin + ADP + phosphate + 3 H(+). The protein operates within cofactor biosynthesis; biotin biosynthesis; biotin from 7,8-diaminononanoate: step 1/2. Functionally, catalyzes a mechanistically unusual reaction, the ATP-dependent insertion of CO2 between the N7 and N8 nitrogen atoms of 7,8-diaminopelargonic acid (DAPA, also called 7,8-diammoniononanoate) to form a ureido ring. The sequence is that of ATP-dependent dethiobiotin synthetase BioD from Helicobacter pylori (strain Shi470).